The chain runs to 366 residues: uncharacterized protein (366 aa).

It to B.subtilis XkdV.

This is an uncharacterized protein from Bacillus subtilis (strain 168).